The following is a 423-amino-acid chain: Serine--tRNA ligase (423 aa).

231–233 serves as a coordination point for L-serine; sequence TAE. Residue 262 to 264 coordinates ATP; it reads RSE. Glu-285 lines the L-serine pocket. 349–352 lines the ATP pocket; the sequence is EISS. Residue Ser-384 coordinates L-serine.

It belongs to the class-II aminoacyl-tRNA synthetase family. Type-1 seryl-tRNA synthetase subfamily. In terms of assembly, homodimer. The tRNA molecule binds across the dimer.

It localises to the cytoplasm. It catalyses the reaction tRNA(Ser) + L-serine + ATP = L-seryl-tRNA(Ser) + AMP + diphosphate + H(+). It carries out the reaction tRNA(Sec) + L-serine + ATP = L-seryl-tRNA(Sec) + AMP + diphosphate + H(+). It functions in the pathway aminoacyl-tRNA biosynthesis; selenocysteinyl-tRNA(Sec) biosynthesis; L-seryl-tRNA(Sec) from L-serine and tRNA(Sec): step 1/1. In terms of biological role, catalyzes the attachment of serine to tRNA(Ser). Is also able to aminoacylate tRNA(Sec) with serine, to form the misacylated tRNA L-seryl-tRNA(Sec), which will be further converted into selenocysteinyl-tRNA(Sec). The chain is Serine--tRNA ligase from Lactococcus lactis subsp. lactis (strain IL1403) (Streptococcus lactis).